We begin with the raw amino-acid sequence, 372 residues long: Molybdopterin synthase catalytic subunit (372 aa).

Substrate-binding positions include 101-102 (HR), lysine 117, and 124-126 (KKE).

Belongs to the MoaE family. MOCS2B subfamily. As to quaternary structure, heterotetramer; composed of 2 small (Mocs2A) and 2 large (Mocs2B) subunits.

It is found in the cytoplasm. It carries out the reaction 2 [molybdopterin-synthase sulfur-carrier protein]-C-terminal-Gly-aminoethanethioate + cyclic pyranopterin phosphate + H2O = molybdopterin + 2 [molybdopterin-synthase sulfur-carrier protein]-C-terminal Gly-Gly + 2 H(+). It functions in the pathway cofactor biosynthesis; molybdopterin biosynthesis. Functionally, catalytic subunit of the molybdopterin synthase complex, a complex that catalyzes the conversion of precursor Z into molybdopterin. Acts by mediating the incorporation of 2 sulfur atoms from thiocarboxylated Mocs2A into precursor Z to generate a dithiolene group. The chain is Molybdopterin synthase catalytic subunit from Drosophila willistoni (Fruit fly).